The chain runs to 515 residues: Hopanoid C-3 methylase (515 aa).

The B12-binding domain maps to 8–141; that stretch reads PSPLMYTKVF…ETLARRGNID (134 aa). Residues 181 to 395 form the Radical SAM core domain; that stretch reads GTLDPCASIE…DIQHAVLPTR (215 aa). [4Fe-4S] cluster-binding residues include cysteine 195, cysteine 199, and cysteine 202.

Belongs to the radical SAM superfamily. It depends on [4Fe-4S] cluster as a cofactor.

In terms of biological role, required for methylation of hopanoids at the C-3 position. This Methylococcus capsulatus (strain ATCC 33009 / NCIMB 11132 / Bath) protein is Hopanoid C-3 methylase.